The following is a 216-amino-acid chain: Probable transaldolase (216 aa).

Lys-83 serves as the catalytic Schiff-base intermediate with substrate.

The protein belongs to the transaldolase family. Type 3B subfamily.

Its subcellular location is the cytoplasm. The catalysed reaction is D-sedoheptulose 7-phosphate + D-glyceraldehyde 3-phosphate = D-erythrose 4-phosphate + beta-D-fructose 6-phosphate. The protein operates within carbohydrate degradation; pentose phosphate pathway; D-glyceraldehyde 3-phosphate and beta-D-fructose 6-phosphate from D-ribose 5-phosphate and D-xylulose 5-phosphate (non-oxidative stage): step 2/3. In terms of biological role, transaldolase is important for the balance of metabolites in the pentose-phosphate pathway. The sequence is that of Probable transaldolase from Hyphomonas neptunium (strain ATCC 15444).